We begin with the raw amino-acid sequence, 533 residues long: MTDPKTSKEQKYDRQLRLWGDHGQEALENAHVCLINATASGTEILKNLVLPGIGAFTIVDGHKVSGEDVGNNFFLSSSAIGKNRAQAATELLQELNSDVSGNFVEESPDKLLDNDCEFFHRFSLVIAVQLPESTCLRLGAVLWEAGVPFLVCRTYGLIGYMRLIVKEHTVVESHPDNALEDLRLDQPFTELKRHVESYDLDNMEKKDHSHTPWIIVVARYLEKWYNENNSQLPKNYKEKEAFRQLLREGILKNENGGLEDEENFEEAIKNVNTALNPTKISSGTQDIFNAEQCENITSQSSSFWVMAHGVRDFVQNEGNGNLPVRGSIPDMIADSDKFIKLQNVYRDKAMRDAAVVSKHVEMLLQSVGKTPESISEQEIKLFCKNAAFLRVVRCRSLADEYSVDTFNKDEITSCMDSPDSEMVLYLMLRSVDRFYQQHSRYPGVYNYQVEEDINKLKLCVNSLLQEYSLNVNVKDDYIHEFCRYGAAEPHTVAAFLGGSAAQEAIKIITHQFVPFNNTFLYNAMSQTSATFQL.

An interaction with uba3 region spans residues 330–343 (DMIADSDKFIKLQN).

It belongs to the ubiquitin-activating E1 family. ULA1 subfamily. As to quaternary structure, heterodimer of uba3 and nae1. The complex binds nedd8 and ube2m.

The protein operates within protein modification; protein neddylation. Its function is as follows. Regulatory subunit of the dimeric uba3-nae1 E1 enzyme. E1 activates nedd8 by first adenylating its C-terminal glycine residue with ATP, thereafter linking this residue to the side chain of the catalytic cysteine, yielding a nedd8-uba3 thioester and free AMP. E1 finally transfers nedd8 to the catalytic cysteine of ube2m. The covalent attachment of nedd8 to target proteins is known as 'neddylation' and the process is involved in the regulation of cell growth, viability and development. The chain is NEDD8-activating enzyme E1 regulatory subunit (nae1) from Danio rerio (Zebrafish).